Here is a 453-residue protein sequence, read N- to C-terminus: Ribosomal protein uS12 methylthiotransferase RimO (453 aa).

The 111-residue stretch at 6-116 (PTVGIVSLGC…VLTAVHEAIA (111 aa)) folds into the MTTase N-terminal domain. Cys15, Cys51, Cys80, Cys148, Cys152, and Cys155 together coordinate [4Fe-4S] cluster. The Radical SAM core domain maps to 134–371 (LTPKHFAYLK…MQLQQQISAN (238 aa)). Residues 374-440 (QAKIGKTIQV…EYDLWATPVG (67 aa)) enclose the TRAM domain.

This sequence belongs to the methylthiotransferase family. RimO subfamily. [4Fe-4S] cluster is required as a cofactor.

It is found in the cytoplasm. It catalyses the reaction L-aspartate(89)-[ribosomal protein uS12]-hydrogen + (sulfur carrier)-SH + AH2 + 2 S-adenosyl-L-methionine = 3-methylsulfanyl-L-aspartate(89)-[ribosomal protein uS12]-hydrogen + (sulfur carrier)-H + 5'-deoxyadenosine + L-methionine + A + S-adenosyl-L-homocysteine + 2 H(+). Its function is as follows. Catalyzes the methylthiolation of an aspartic acid residue of ribosomal protein uS12. The sequence is that of Ribosomal protein uS12 methylthiotransferase RimO from Hydrogenovibrio crunogenus (strain DSM 25203 / XCL-2) (Thiomicrospira crunogena).